A 104-amino-acid polypeptide reads, in one-letter code: Large ribosomal subunit protein uL23 (104 aa).

The protein belongs to the universal ribosomal protein uL23 family. As to quaternary structure, part of the 50S ribosomal subunit. Contacts protein L29, and trigger factor when it is bound to the ribosome.

One of the early assembly proteins it binds 23S rRNA. One of the proteins that surrounds the polypeptide exit tunnel on the outside of the ribosome. Forms the main docking site for trigger factor binding to the ribosome. This is Large ribosomal subunit protein uL23 from Neisseria meningitidis serogroup B (strain ATCC BAA-335 / MC58).